The primary structure comprises 754 residues: Disintegrin and metalloproteinase domain-containing protein 32 (754 aa).

Positions 1 to 22 are cleaved as a signal peptide; sequence MLGAMLHTLLLLLLAELGALLA. A Phosphoserine modification is found at serine 23. Positions 23 to 176 are excised as a propeptide; sequence SGPESQSSFL…TNYGILINKK (154 aa). Asparagine 126 is a glycosylation site (N-linked (GlcNAc...) asparagine). Topologically, residues 177 to 689 are extracellular; that stretch reads PKSPFKNLFP…ERASKNQEKK (513 aa). The region spanning 187 to 384 is the Peptidase M12B domain; that stretch reads LYLEMSIVVD…EGAKCLQNKP (198 aa). Cystine bridges form between cysteine 296–cysteine 379, cysteine 338–cysteine 363, cysteine 340–cysteine 345, and cysteine 454–cysteine 475. 4 N-linked (GlcNAc...) asparagine glycosylation sites follow: asparagine 362, asparagine 469, asparagine 570, and asparagine 571. The Disintegrin domain maps to 391–483; sequence AAVCGNGKVE…NCPPDVTINN (93 aa). In terms of domain architecture, EGF-like spans 628 to 660; the sequence is QSKTCSSKCHGNGVCNSHGVCHCNAGYSPPNCQ. Intrachain disulfides connect cysteine 632-cysteine 642, cysteine 636-cysteine 648, and cysteine 650-cysteine 659. The helical transmembrane segment at 690-710 threads the bilayer; the sequence is WLLSLYIVLIILASVFLIGTG. At 711–754 the chain is on the cytoplasmic side; sequence WKGLKQCGSKEEESMSSESKSEDSTYTYVSRSTSETSSMTSTSS. Residues 720-733 show a composition bias toward basic and acidic residues; it reads KEEESMSSESKSED. Residues 720–754 form a disordered region; sequence KEEESMSSESKSEDSTYTYVSRSTSETSSMTSTSS. Low complexity predominate over residues 734-754; sequence STYTYVSRSTSETSSMTSTSS.

As to expression, expressed in sperm (at protein level). Highly expressed in the testis and weakly expressed in the epididymis, brain and heart.

It localises to the membrane. In terms of biological role, may play a role in sperm development and fertilization This is a non-catalytic metalloprotease-like protein. The sequence is that of Disintegrin and metalloproteinase domain-containing protein 32 from Mus musculus (Mouse).